A 55-amino-acid polypeptide reads, in one-letter code: Large ribosomal subunit protein bL33 (55 aa).

It belongs to the bacterial ribosomal protein bL33 family.

The polypeptide is Large ribosomal subunit protein bL33 (Arthrobacter sp. (strain FB24)).